Consider the following 421-residue polypeptide: 4-hydroxy-3-methylbut-2-en-1-yl diphosphate synthase (flavodoxin) (421 aa).

[4Fe-4S] cluster is bound by residues C311, C314, C357, and E364.

It belongs to the IspG family. It depends on [4Fe-4S] cluster as a cofactor.

The catalysed reaction is (2E)-4-hydroxy-3-methylbut-2-enyl diphosphate + oxidized [flavodoxin] + H2O + 2 H(+) = 2-C-methyl-D-erythritol 2,4-cyclic diphosphate + reduced [flavodoxin]. It functions in the pathway isoprenoid biosynthesis; isopentenyl diphosphate biosynthesis via DXP pathway; isopentenyl diphosphate from 1-deoxy-D-xylulose 5-phosphate: step 5/6. Converts 2C-methyl-D-erythritol 2,4-cyclodiphosphate (ME-2,4cPP) into 1-hydroxy-2-methyl-2-(E)-butenyl 4-diphosphate. This is 4-hydroxy-3-methylbut-2-en-1-yl diphosphate synthase (flavodoxin) from Xanthomonas euvesicatoria pv. vesicatoria (strain 85-10) (Xanthomonas campestris pv. vesicatoria).